The chain runs to 396 residues: Putative 2-hydroxyacid dehydrogenase YPL113C (396 aa).

NAD(+) contacts are provided by residues 227–228, 311–313, and D337; these read SI and VGR. R313 is an active-site residue. E342 is a catalytic residue. H361 functions as the Proton donor in the catalytic mechanism. NAD(+) is bound at residue 361–364; the sequence is HIGS.

Belongs to the D-isomer specific 2-hydroxyacid dehydrogenase family.

Functionally, putative 2-hydroxyacid dehydrogenase. The protein is Putative 2-hydroxyacid dehydrogenase YPL113C of Saccharomyces cerevisiae (strain ATCC 204508 / S288c) (Baker's yeast).